The chain runs to 185 residues: Ribosome-recycling factor (185 aa).

Belongs to the RRF family.

It localises to the cytoplasm. Responsible for the release of ribosomes from messenger RNA at the termination of protein biosynthesis. May increase the efficiency of translation by recycling ribosomes from one round of translation to another. In Nocardia farcinica (strain IFM 10152), this protein is Ribosome-recycling factor.